We begin with the raw amino-acid sequence, 293 residues long: Vibriobactin-specific isochorismatase (293 aa).

A Carrier domain is found at 211 to 287; that stretch reads KLTGLSLRTM…QWWQTIQANL (77 aa). O-(pantetheine 4'-phosphoryl)serine is present on S248.

Belongs to the isochorismatase family. It depends on pantetheine 4'-phosphate as a cofactor.

It carries out the reaction isochorismate + H2O = (2S,3S)-2,3-dihydroxy-2,3-dihydrobenzoate + pyruvate. The protein operates within siderophore biosynthesis; vibriobactin biosynthesis. In terms of biological role, involved in the biosynthesis of the catechol siderophore vibriobactin. Vibriobactin is a chelating compound involved in transporting iron from the bacterial environment into the cell cytoplasm. The protein is Vibriobactin-specific isochorismatase (vibB) of Vibrio cholerae serotype O1 (strain ATCC 39541 / Classical Ogawa 395 / O395).